The chain runs to 185 residues: p53 apoptosis effector related to PMP-22 (185 aa).

Transmembrane regions (helical) follow at residues Trp13 to Gln33, Val74 to Val94, Leu105 to Ile125, and Trp143 to Cys163.

The protein belongs to the TMEM47 family.

It localises to the cell junction. The protein localises to the desmosome. It is found in the cell membrane. Its subcellular location is the cytoplasm. In terms of biological role, component of intercellular desmosome junctions. Positively regulates apoptosis in the early-stage embryo in response to UV irradiation, this is partially dependent on tp53 activation. Required for the survival of cell populations in the developing notochord and skin, therefore required for normal embryogenesis beyond 30 hpf. Acts as a positive regulator of endothelial cell apoptosis in response to blood flow-derived shear stress. This is p53 apoptosis effector related to PMP-22 from Danio rerio (Zebrafish).